The chain runs to 238 residues: Large ribosomal subunit protein uL2 (238 aa).

Residues 199 to 238 (PHGGGLHQSVSRPSTVSRNAPPGRKVGHIAARRTGRKEGA) are disordered. The segment covering 206-216 (QSVSRPSTVSR) has biased composition (polar residues). The span at 223–238 (KVGHIAARRTGRKEGA) shows a compositional bias: basic residues.

This sequence belongs to the universal ribosomal protein uL2 family. Part of the 50S ribosomal subunit. Forms a bridge to the 30S subunit in the 70S ribosome.

Functionally, one of the primary rRNA binding proteins. Required for association of the 30S and 50S subunits to form the 70S ribosome, for tRNA binding and peptide bond formation. It has been suggested to have peptidyltransferase activity; this is somewhat controversial. Makes several contacts with the 16S rRNA in the 70S ribosome. This Sulfurisphaera tokodaii (strain DSM 16993 / JCM 10545 / NBRC 100140 / 7) (Sulfolobus tokodaii) protein is Large ribosomal subunit protein uL2.